Here is a 49-residue protein sequence, read N- to C-terminus: Sperm protamine P1 (49 aa).

The protein belongs to the protamine P1 family. In terms of tissue distribution, testis.

The protein localises to the nucleus. It is found in the chromosome. Protamines substitute for histones in the chromatin of sperm during the haploid phase of spermatogenesis. They compact sperm DNA into a highly condensed, stable and inactive complex. In Rhinopoma hardwickii (Lesser mouse-tailed bat), this protein is Sperm protamine P1 (PRM1).